Reading from the N-terminus, the 855-residue chain is Beclin-1-like protein B (855 aa).

Disordered regions lie at residues 92–212, 236–271, 294–380, and 407–475; these read FGKR…GSLS, LVAD…ESNN, ATIP…QKPR, and VDGG…QQQP. 2 stretches are compositionally biased toward low complexity: residues 99–123 and 131–143; these read TQSN…SLSL and QQQQ…QQQT. Over residues 144–156 the composition is skewed to polar residues; that stretch reads FNDQSKLTATTPT. Residues 177-200 are compositionally biased toward low complexity; the sequence is HSNNSSNGSDHGGNVNTTGVSPSS. Residues 294–348 are compositionally biased toward low complexity; sequence ATIPTTTTTSTPTTPSTVGGTTPSPPSSSSSSSSSSSVITSPISRISPSNITSPS. Composition is skewed to polar residues over residues 368–377 and 413–445; these read LNISQVSSPQ and SGTE…TTPP. Over residues 446-474 the composition is skewed to low complexity; the sequence is LLSNSMNNSTNNLQSLQQQQQQQQQQQQQ. Residues 538-595 are a coiled coil; sequence EKGKTEEDLEELGKEMTLLCEEEEQLRLMIENTHQERKEVEQLTLQLQDRIATLKSLE. A disordered region spans residues 826 to 855; sequence LNNNQNNNNINNNNNNNINNNNNNNVNKRN.

This sequence belongs to the beclin family.

The protein resides in the endosome membrane. Its function is as follows. Involved in autophagy. May be required to recruit the atg8-phosphatidylinositol conjugate and the atg12-atg5 conjugate to the pre-autophagosomal structure. This Dictyostelium discoideum (Social amoeba) protein is Beclin-1-like protein B (atg6B).